Here is a 244-residue protein sequence, read N- to C-terminus: Serine acetyltransferase (244 aa).

Belongs to the transferase hexapeptide repeat family.

The protein localises to the cytoplasm. The catalysed reaction is L-serine + acetyl-CoA = O-acetyl-L-serine + CoA. Its pathway is amino-acid biosynthesis; L-cysteine biosynthesis; L-cysteine from L-serine: step 1/2. The protein is Serine acetyltransferase (cysE) of Synechococcus elongatus (strain ATCC 33912 / PCC 7942 / FACHB-805) (Anacystis nidulans R2).